Reading from the N-terminus, the 560-residue chain is Glutamate--tRNA ligase, chloroplastic/mitochondrial (560 aa).

Residue 47-49 participates in L-glutamate binding; sequence RFA. The 'HIGH' region signature appears at 50-60; that stretch reads PSPTGNLHVGG. His57 serves as a coordination point for ATP. L-glutamate is bound by residues Glu83, 235-239, and Arg253; that span reads YNFCV. ATP-binding positions include Glu256 and 291-295; that span reads KLSKR. The short motif at 291 to 295 is the 'KMSKS' region element; it reads KLSKR.

The protein belongs to the class-I aminoacyl-tRNA synthetase family. Glutamate--tRNA ligase type 1 subfamily.

Its subcellular location is the plastid. It localises to the chloroplast. It is found in the mitochondrion. It catalyses the reaction tRNA(Glu) + L-glutamate + ATP = L-glutamyl-tRNA(Glu) + AMP + diphosphate. Functionally, catalyzes the attachment of glutamate to tRNA(Glu) in a two-step reaction: glutamate is first activated by ATP to form Glu-AMP and then transferred to the acceptor end of tRNA(Glu). The polypeptide is Glutamate--tRNA ligase, chloroplastic/mitochondrial (Hordeum vulgare (Barley)).